A 261-amino-acid polypeptide reads, in one-letter code: MSRKPLIAGNWKMNLNHFEAIALVQKIAFSLPDKYFDKVDVTVIPPFTDLRSVQTLVDGDKLRLTYGAQDVSQHDSGAYTGEISGAFLAKLGCTFAVVGHSERRTYHNEDDALVAAKAAAAFKHGLTPIICIGEHLDVREAGNHVEYNVNQLRGSLAGLSAEQIGQAVIAYEPVWAIGTGRVASAADAQEVCKAIRDELGNLASPELAAGVRVLYGGSVNAKNVGEIVGQADVDGALVGGASLDGEQFSMLSAIAAGGPLP.

N10–K12 provides a ligand contact to substrate. Catalysis depends on H100, which acts as the Electrophile. The active-site Proton acceptor is E172. Residues G178, S218, and G239 to G240 contribute to the substrate site.

It belongs to the triosephosphate isomerase family. Homodimer.

It is found in the cytoplasm. It catalyses the reaction D-glyceraldehyde 3-phosphate = dihydroxyacetone phosphate. It functions in the pathway carbohydrate biosynthesis; gluconeogenesis. Its pathway is carbohydrate degradation; glycolysis; D-glyceraldehyde 3-phosphate from glycerone phosphate: step 1/1. Its function is as follows. Involved in the gluconeogenesis. Catalyzes stereospecifically the conversion of dihydroxyacetone phosphate (DHAP) to D-glyceraldehyde-3-phosphate (G3P). In Mycolicibacterium vanbaalenii (strain DSM 7251 / JCM 13017 / BCRC 16820 / KCTC 9966 / NRRL B-24157 / PYR-1) (Mycobacterium vanbaalenii), this protein is Triosephosphate isomerase.